The chain runs to 407 residues: Na(+)-translocating NADH-quinone reductase subunit F (407 aa).

The chain crosses the membrane as a helical span at residues 4–24 (IILGVFFFTAIVVALVFVILG). The 2Fe-2S ferredoxin-type domain occupies 33 to 125 (GNVEVLINGE…NMKIHVHEEV (93 aa)). Residues Cys-68, Cys-74, Cys-77, and Cys-109 each contribute to the [2Fe-2S] cluster site. The FAD-binding FR-type domain maps to 128–269 (VKKWECTVRS…SGPFGEFFAR (142 aa)).

The protein belongs to the NqrF family. Composed of six subunits; NqrA, NqrB, NqrC, NqrD, NqrE and NqrF. Requires [2Fe-2S] cluster as cofactor. FAD serves as cofactor.

It localises to the cell inner membrane. The enzyme catalyses a ubiquinone + n Na(+)(in) + NADH + H(+) = a ubiquinol + n Na(+)(out) + NAD(+). Functionally, NQR complex catalyzes the reduction of ubiquinone-1 to ubiquinol by two successive reactions, coupled with the transport of Na(+) ions from the cytoplasm to the periplasm. The first step is catalyzed by NqrF, which accepts electrons from NADH and reduces ubiquinone-1 to ubisemiquinone by a one-electron transfer pathway. The chain is Na(+)-translocating NADH-quinone reductase subunit F from Methylococcus capsulatus (strain ATCC 33009 / NCIMB 11132 / Bath).